Consider the following 269-residue polypeptide: Eukaryotic translation initiation factor 3 subunit G-2 (269 aa).

The region spanning 189–267 (SAVRISNLSE…LILCVEWSKP (79 aa)) is the RRM domain.

The protein belongs to the eIF-3 subunit G family. As to quaternary structure, component of the eukaryotic translation initiation factor 3 (eIF-3) complex. The eIF-3 complex interacts with pix.

The protein localises to the cytoplasm. RNA-binding component of the eukaryotic translation initiation factor 3 (eIF-3) complex, which is involved in protein synthesis of a specialized repertoire of mRNAs and, together with other initiation factors, stimulates binding of mRNA and methionyl-tRNAi to the 40S ribosome. The eIF-3 complex specifically targets and initiates translation of a subset of mRNAs involved in cell proliferation. This subunit can bind 18S rRNA. In Drosophila ananassae (Fruit fly), this protein is Eukaryotic translation initiation factor 3 subunit G-2.